The chain runs to 704 residues: MWGRDYELKYISYPKSVAIIGASKTEGKVGYAIMKNLKDFNGKIYPINPKYDEIFGIKCYKSVLDVEDDIDLAVIVVPNIVVPKVLEECGKKGVKGAVIITAGFSEVGNYELENKIKEIAKRYNIRIIGPNCLGIMNTHINLNATFAKVFPPKGGVSIISQSGAVLNAILDIAPLLNIGFSKVVSIGNKADIQESDLLEYFLDDEDTKIVVLYIEGLKDKRFLKVAKKLSKKKPIIALKSGRTEVGKKAAKSHTGSLAGEDVIYEAAFKEAGIIRAYTFEELVDLIHLFSTQPTISSNEIGIITNAGGFGVLAADSCVDYNMKLSNFEKSTIEKLKNILPPTANISNPLDIIGDATPERYKKVIEVLAEDSNVKGLLVILTPQEMTKPLEVAKSIIEVKNSHKEFKNKPLITSFVGGVSVKGAKSYLRKNGIPAYITPENGVKALSHLYKYSLMKVKEDYDEYLENIKEEFIKITEENKEIIKELLSNPNEYTAKKLLSIYGLPVPKGYLAKNEDEALEYCKKLGKCVMKIVSPQIIHKTEAGGVIINPKNPKEAFKKLIENAKEYAKRMGIDNLIIEGVLVEEFIEKDMMEIIIGAKRDDIFGSVVMVGLGGVFVEVLKDVSFGISPITRDFAHEMLRELKSYKVLEGVRGRPKRDINFIVDTLIKIGVFMDIHKEIKELDLNPVFVFNEKEGGCIGDARIIK.

This sequence in the N-terminal section; belongs to the acetate CoA ligase alpha subunit family. The protein in the C-terminal section; belongs to the acetate CoA ligase beta subunit family. As to quaternary structure, homodimer.

The catalysed reaction is acetate + ATP + CoA = acetyl-CoA + ADP + phosphate. Catalyzes the formation of acetate and ATP from acetyl-CoA by using ADP and phosphate. Can also use butyryl-CoA, but not phenylacetyl-CoA. Cannot catalyze the reverse reaction. The polypeptide is Acetate--CoA ligase [ADP-forming] (Methanocaldococcus jannaschii (strain ATCC 43067 / DSM 2661 / JAL-1 / JCM 10045 / NBRC 100440) (Methanococcus jannaschii)).